We begin with the raw amino-acid sequence, 2563 residues long: Highly reducing polyketide synthase 2 (2563 aa).

Positions 11 to 451 (MSDIAIVGYS…GSNSHIVLDD (441 aa)) constitute a Ketosynthase family 3 (KS3) domain. Catalysis depends on for beta-ketoacyl synthase activity residues C182, H317, and H357. The 302-residue stretch at 589–890 (FAFTGQGAQY…DTLSEMSSAS (302 aa)) folds into the Malonyl-CoA:ACP transacylase (MAT) domain. Positions 970 to 1101 (GELLGVRVSD…ANISVEFQDN (132 aa)) are N-terminal hotdog fold. Residues 970 to 1269 (GELLGVRVSD…TSAVSGGITH (300 aa)) form the PKS/mFAS DH domain. Residue H1002 is the Proton acceptor; for dehydratase activity of the active site. A C-terminal hotdog fold region spans residues 1126-1269 (TLPIDPRVFY…TSAVSGGITH (144 aa)). The active-site Proton donor; for dehydratase activity is D1186. A methyltransferase (CMet) domain region spans residues 1296 to 1618 (FAANAVPKDD…FSGNDLVIRD (323 aa)). One can recognise an Enoyl reductase (ER) domain in the interval 1858–2168 (GSLDSLQFVE…QEDTSERVIV (311 aa)). In terms of domain architecture, Ketoreductase (KR) spans 2192 to 2370 (STYLVAGGSG…ALSLDIGWMS (179 aa)). The region spanning 2480-2561 (SDARERQQVV…GVAEVVEARS (82 aa)) is the Carrier domain. The residue at position 2521 (S2521) is an O-(pantetheine 4'-phosphoryl)serine.

Pantetheine 4'-phosphate serves as cofactor.

The protein operates within secondary metabolite biosynthesis. Functionally, highly reducing polyketide synthase; part of the gene cluster that mediates the biosynthesis of the tetraketides fugralins such as linear fugralin A and cyclic fugralin B, volatile compounds that play a role in the asexual reproductive cycle but are not involved in pathogenicity. One of the key features of fugralins is the presence of a double methyl group, which is only rarely encountered in fungal secondary metabolites. As the fugralins cluster does not contain an independent methyltransferase, the PKS FGR1 is probably responsible for adding two methyl groups to the same carbon atom. Fugralin B is similar to fugralin A except for a cyclization between the carboxylic acid C-8 and the alcohol on C-4 resulting in a six membered lactone ring, probably catalyzed by the cyclase FGR4. The exact role of the individual cluster genes remains unknown and further work is needed to unravel the biosynthetic pathway. This chain is Highly reducing polyketide synthase 2, found in Gibberella zeae (strain ATCC MYA-4620 / CBS 123657 / FGSC 9075 / NRRL 31084 / PH-1) (Wheat head blight fungus).